A 944-amino-acid chain; its full sequence is Calcium-transporting ATPase type 2C member 2 (944 aa).

At 1–104 (MGRRFKFLQK…DNTEPVWKKY (104 aa)) the chain is on the cytoplasmic side. The interval 69–93 (VDLDSGLSEFAVAQRRLVHGWNEFV) is interaction with ORAI1. The chain crosses the membrane as a helical span at residues 105 to 125 (LDQFRNPLILLLLGSSVVSVL). The Extracellular portion of the chain corresponds to 126–127 (TK). A helical membrane pass occupies residues 128–148 (EYEDAISIALAVLIVVTVGFI). The Cytoplasmic portion of the chain corresponds to 149–229 (QEYRSEKSLE…EVEPCSKTDS (81 aa)). The helical transmembrane segment at 230 to 250 (PLAGGGDLSTLSNVVFMGTLV) threads the bilayer. The Extracellular segment spans residues 251–291 (QCGKGQGVVIGTGEQSQFGEVFKMMRAEETPKTPLQKSMDK). Thr262 carries the phosphothreonine modification. Ser266 carries the post-translational modification Phosphoserine. Residues 292–312 (LGKQLTVFSFGIIGLLMLVGW) form a helical membrane-spanning segment. Residues 313 to 329 (VQGKPLLSMFTIGVSLA) lie on the Cytoplasmic side of the membrane. Positions 330, 331, 333, and 335 each coordinate Ca(2+). A helical transmembrane segment spans residues 330–350 (VAAIPEGLPIVVMVTLVLGVL). Topologically, residues 351-748 (RMAKKRVIVK…IAALSLITLS (398 aa)) are extracellular. The active-site 4-aspartylphosphate intermediate is Asp377. Mg(2+) is bound by residues Asp672 and Asp676. The helical transmembrane segment at 749–769 (TVCNLPNPLNAMQILWVNIIM) threads the bilayer. Ca(2+) is bound by residues Asn766 and Asp770. At 770-802 (DGPPAQSLGVEPVDRDALKRPPRSVKDTILNRA) the chain is on the cytoplasmic side. Residues 803-823 (LILKILMSAAVILGGTLFIFW) form a helical membrane-spanning segment. The Extracellular portion of the chain corresponds to 824–835 (REIPENRTSTPR). Residues 836–853 (TTTMAFTCFVFFDLFNAL) traverse the membrane as a helical segment. The Cytoplasmic portion of the chain corresponds to 854 to 872 (SCRSQTKLIFEIGFFRNRM). A helical transmembrane segment spans residues 873–893 (FLYSILGSLLGQLAVIYAPPL). The Extracellular segment spans residues 894–903 (QKVFQTENLS). Residues 904 to 924 (ALDLLLLTGLASSVFILSELL) form a helical membrane-spanning segment. Residues 925–944 (KLCEKFCSRAKADQMLPEAV) lie on the Cytoplasmic side of the membrane.

The protein belongs to the cation transport ATPase (P-type) (TC 3.A.3) family. Type IIA subfamily. As to quaternary structure, interacts (via N-terminus) with ORAI1 (via N- and C-termini); this interaction regulates Ca(2+) influx at the plasma membrane.

Its subcellular location is the golgi apparatus. The protein resides in the trans-Golgi network membrane. The protein localises to the cell membrane. It is found in the basolateral cell membrane. The enzyme catalyses Ca(2+)(in) + ATP + H2O = Ca(2+)(out) + ADP + phosphate + H(+). It carries out the reaction Mn(2+)(in) + ATP + H2O = Mn(2+)(out) + ADP + phosphate + H(+). In terms of biological role, ATP-driven pump that supplies the Golgi apparatus with Ca(2+) and Mn(2+) ions, both essential cofactors for processing and trafficking of newly synthesized proteins in the secretory pathway. Within a catalytic cycle, acquires Ca(2+) or Mn(2+) ions on the cytoplasmic side of the membrane and delivers them to the lumenal side. The transfer of ions across the membrane is coupled to ATP hydrolysis and is associated with a transient phosphorylation that shifts the pump conformation from inward-facing to outward-facing state. Induces Ca(2+) influx independently of its ATP-driven pump function. At the basolateral membrane of mammary epithelial cells, interacts with Ca(2+) channel ORAI1 and mediates Ca(2+) entry independently of the Ca(2+) content of endoplasmic reticulum or Golgi stores. May facilitate transepithelial transport of large quantities of Ca(2+) for milk secretion via activation of Ca(2+) influx channels at the plasma membrane and active Ca(2+) transport at the Golgi apparatus. This chain is Calcium-transporting ATPase type 2C member 2 (Atp2c2), found in Rattus norvegicus (Rat).